Consider the following 407-residue polypeptide: Lymphocyte transmembrane adapter 1 (407 aa).

The disordered stretch occupies residues 1–25 (MYSTPAPPEVTRRNSEPSTRQGTLG). Residues 1–33 (MYSTPAPPEVTRRNSEPSTRQGTLGSLQGEKGQ) lie on the Extracellular side of the membrane. Residues 16–25 (EPSTRQGTLG) are compositionally biased toward polar residues. A helical; Signal-anchor for type III membrane protein membrane pass occupies residues 34 to 54 (IIFPGFVVLLTIILVIIAACI). The Cytoplasmic segment spans residues 55-407 (LWSWKKQKKR…LATETSDEDA (353 aa)). The disordered stretch occupies residues 109–131 (ESLLSRASDSPEPEAPQANGSLQ). A phosphotyrosine mark is found at Tyr185, Tyr260, Tyr286, and Tyr353. The interval 331–388 (SAQSEDSAMVHREEQSSEDSSDYETVLVAELEGRDWKQGPGTQHPSDEGTPGDLAGKL) is disordered.

In terms of assembly, when phosphorylated, interacts with GRB2, PIK3R1 and GRAP2. In terms of processing, phosphorylated on tyrosines upon TCR or BCR activation; which leads to the recruitment of GRB2, PIK3R1 and GRAP2. As to expression, expressed in T-cells and B-cells.

The protein localises to the cell membrane. Negatively regulates TCR (T-cell antigen receptor)-mediated signaling in T-cells and BCR (B-cell antigen receptor)-mediated signaling in B-cells. This Mus musculus (Mouse) protein is Lymphocyte transmembrane adapter 1 (Lax1).